Consider the following 291-residue polypeptide: Probable 2-(5''-triphosphoribosyl)-3'-dephosphocoenzyme-A synthase (291 aa).

It belongs to the CitG/MdcB family.

It catalyses the reaction 3'-dephospho-CoA + ATP = 2'-(5''-triphospho-alpha-D-ribosyl)-3'-dephospho-CoA + adenine. Its function is as follows. Involved in the formation of 2-(5''-phosphoribosyl)-3'-dephosphocoenzyme-A, the prosthetic group of the acyl-carrier protein of the malonate decarboxylase. This is Probable 2-(5''-triphosphoribosyl)-3'-dephosphocoenzyme-A synthase from Pseudomonas syringae pv. syringae (strain B728a).